A 507-amino-acid polypeptide reads, in one-letter code: Maturase K (507 aa).

Belongs to the intron maturase 2 family. MatK subfamily.

It localises to the plastid. Its subcellular location is the chloroplast. Its function is as follows. Usually encoded in the trnK tRNA gene intron. Probably assists in splicing its own and other chloroplast group II introns. In Kalmia procumbens (Alpine azalea), this protein is Maturase K.